Reading from the N-terminus, the 699-residue chain is Protein STRUBBELIG-RECEPTOR FAMILY 5 (699 aa).

The N-terminal stretch at 1-22 (MTQKLVRLVIVSLAITVTLLQA) is a signal peptide. The Extracellular portion of the chain corresponds to 23-273 (KTDNQEVSAL…DGGGITAGTG (251 aa)). 5 LRR repeats span residues 93–115 (SLTTFDLSKNNLKGNIPYQLPPN), 116–136 (IANLDFSENELDGNVPYSLSQ), 139–161 (NLQSINLGQNKLNGELPDMFQKL), 163–186 (KLETLDFSLNKLSGKLPQSFANLT), and 187–209 (SLKKLHLQDNRFTGDINVLRNLA). Residue asparagine 184 is glycosylated (N-linked (GlcNAc...) asparagine). The interval 239–263 (NDWSTETAPPPPPGVKYGRKSSGSK) is disordered. A helical transmembrane segment spans residues 274 to 294 (MVIAGACLGVLVLIIVLIALV). Residues 295 to 699 (SKKKSSLSPH…SYRAHDDYDY (405 aa)) are Cytoplasmic-facing. A Phosphoserine modification is found at serine 368. In terms of domain architecture, Protein kinase spans 404–675 (FSPGNLLGEG…SEVVEALVRM (272 aa)). ATP-binding positions include 410–418 (LGEGSIGRV) and lysine 432.

This sequence belongs to the protein kinase superfamily. Ser/Thr protein kinase family. As to expression, expressed in leaves and flowers.

Its subcellular location is the membrane. This Arabidopsis thaliana (Mouse-ear cress) protein is Protein STRUBBELIG-RECEPTOR FAMILY 5 (SRF5).